The primary structure comprises 334 residues: UPF0104 membrane protein MTH_378 (334 aa).

8 consecutive transmembrane segments (helical) span residues 7–27 (FYFF…MGPS), 33–53 (VYMA…GVLA), 120–140 (FFDL…VPVI), 142–162 (VIAL…YLVN), 218–238 (VIFI…YLVF), 247–267 (FSAV…SALP), 277–297 (MAGL…IALV), and 300–320 (IISF…YAGE).

The protein belongs to the UPF0104 family.

The protein resides in the cell membrane. This Methanothermobacter thermautotrophicus (strain ATCC 29096 / DSM 1053 / JCM 10044 / NBRC 100330 / Delta H) (Methanobacterium thermoautotrophicum) protein is UPF0104 membrane protein MTH_378.